The chain runs to 147 residues: Acidic phospholipase A2 1 (147 aa).

An N-terminal signal peptide occupies residues Met1 to Ala19. Residues Ala20–Leu27 constitute a propeptide that is removed on maturation. 7 disulfides stabilise this stretch: Cys38-Cys99, Cys54-Cys146, Cys56-Cys72, Cys71-Cys127, Cys78-Cys120, Cys88-Cys113, and Cys106-Cys118. Ca(2+) is bound by residues Tyr55, Gly57, and Gly59. His75 is a catalytic residue. Asp76 contributes to the Ca(2+) binding site. The active site involves Asp121.

It belongs to the phospholipase A2 family. Group I subfamily. D49 sub-subfamily. It depends on Ca(2+) as a cofactor. In terms of tissue distribution, expressed by the venom gland.

It is found in the secreted. The catalysed reaction is a 1,2-diacyl-sn-glycero-3-phosphocholine + H2O = a 1-acyl-sn-glycero-3-phosphocholine + a fatty acid + H(+). Its function is as follows. PLA2 catalyzes the calcium-dependent hydrolysis of the 2-acyl groups in 3-sn-phosphoglycerides. In Bungarus flaviceps flaviceps (Red-headed krait), this protein is Acidic phospholipase A2 1.